Here is a 347-residue protein sequence, read N- to C-terminus: Phenylalanine--tRNA ligase alpha subunit (347 aa).

Residue Glu-259 participates in Mg(2+) binding.

This sequence belongs to the class-II aminoacyl-tRNA synthetase family. Phe-tRNA synthetase alpha subunit type 1 subfamily. In terms of assembly, tetramer of two alpha and two beta subunits. The cofactor is Mg(2+).

It localises to the cytoplasm. The catalysed reaction is tRNA(Phe) + L-phenylalanine + ATP = L-phenylalanyl-tRNA(Phe) + AMP + diphosphate + H(+). This chain is Phenylalanine--tRNA ligase alpha subunit, found in Oenococcus oeni (strain ATCC BAA-331 / PSU-1).